Here is a 356-residue protein sequence, read N- to C-terminus: 1-deoxy-D-xylulose 5-phosphate reductoisomerase (356 aa).

Residues Thr7, Gly8, Ser9, Ile10, Gly31, Asn33, and Asn111 each coordinate NADPH. A 1-deoxy-D-xylulose 5-phosphate-binding site is contributed by Lys112. An NADPH-binding site is contributed by Glu113. Asp131 provides a ligand contact to Mn(2+). Ser132, Glu133, Ser155, and His178 together coordinate 1-deoxy-D-xylulose 5-phosphate. Glu133 contacts Mn(2+). Residue Gly184 participates in NADPH binding. Positions 191, 196, 197, and 200 each coordinate 1-deoxy-D-xylulose 5-phosphate. Residue Glu200 coordinates Mn(2+).

The protein belongs to the DXR family. Mg(2+) serves as cofactor. Requires Mn(2+) as cofactor.

It catalyses the reaction 2-C-methyl-D-erythritol 4-phosphate + NADP(+) = 1-deoxy-D-xylulose 5-phosphate + NADPH + H(+). It functions in the pathway isoprenoid biosynthesis; isopentenyl diphosphate biosynthesis via DXP pathway; isopentenyl diphosphate from 1-deoxy-D-xylulose 5-phosphate: step 1/6. Catalyzes the NADPH-dependent rearrangement and reduction of 1-deoxy-D-xylulose-5-phosphate (DXP) to 2-C-methyl-D-erythritol 4-phosphate (MEP). This Campylobacter jejuni subsp. jejuni serotype O:6 (strain 81116 / NCTC 11828) protein is 1-deoxy-D-xylulose 5-phosphate reductoisomerase.